We begin with the raw amino-acid sequence, 436 residues long: Protein translocase subunit SecY (436 aa).

10 helical membrane-spanning segments follow: residues 18–38 (IAFTLGLIAVYRMGDFVPATG), 69–89 (LLQVSVFALGIMPYITASIIV), 116–138 (YTRYLTLALALLQATTMASLART), 154–174 (ILTVLLVVIALTTGCLIVMWF), 187–207 (MSLLIFTSIAAGFPAGLGQVV), 214–234 (VFAIVMGIGLLTMLAIVFVEE), 266–286 (MANVIPVIFASSVLMLPGILI), 314–334 (PVYMALYFLLIIGFTYFYVSI), 375–395 (VVGALYLGIVAMIPLIAFAVI), and 396–416 (GTSQNFPLGGTSILIMVGVGL).

It belongs to the SecY/SEC61-alpha family. As to quaternary structure, component of the Sec protein translocase complex. Heterotrimer consisting of SecY, SecE and SecG subunits. The heterotrimers can form oligomers, although 1 heterotrimer is thought to be able to translocate proteins. Interacts with the ribosome. Interacts with SecDF, and other proteins may be involved. Interacts with SecA.

It is found in the cell membrane. In terms of biological role, the central subunit of the protein translocation channel SecYEG. Consists of two halves formed by TMs 1-5 and 6-10. These two domains form a lateral gate at the front which open onto the bilayer between TMs 2 and 7, and are clamped together by SecE at the back. The channel is closed by both a pore ring composed of hydrophobic SecY resides and a short helix (helix 2A) on the extracellular side of the membrane which forms a plug. The plug probably moves laterally to allow the channel to open. The ring and the pore may move independently. The sequence is that of Protein translocase subunit SecY from Micrococcus luteus (Micrococcus lysodeikticus).